A 476-amino-acid chain; its full sequence is F-box protein At5g07670 (476 aa).

The region spanning 59-111 (PDFTLLLPDLILIRVIQKIPNSQRKNLSLVCKRWFRLHGRLVRSFKVSDWEFL) is the F-box domain.

The polypeptide is F-box protein At5g07670 (Arabidopsis thaliana (Mouse-ear cress)).